The following is a 164-amino-acid chain: NADH-quinone oxidoreductase subunit I (164 aa).

2 consecutive 4Fe-4S ferredoxin-type domains span residues 55–85 (LRRYPNGEERCIACKLCEAICPAQAITIDAE) and 95–124 (TRYDIDMTKCIYCGFCQEACPVDAIVEGPN). [4Fe-4S] cluster-binding residues include Cys65, Cys68, Cys71, Cys75, Cys104, Cys107, Cys110, and Cys114.

Belongs to the complex I 23 kDa subunit family. NDH-1 is composed of 14 different subunits. Subunits NuoA, H, J, K, L, M, N constitute the membrane sector of the complex. [4Fe-4S] cluster is required as a cofactor.

It localises to the cell inner membrane. The catalysed reaction is a quinone + NADH + 5 H(+)(in) = a quinol + NAD(+) + 4 H(+)(out). Its function is as follows. NDH-1 shuttles electrons from NADH, via FMN and iron-sulfur (Fe-S) centers, to quinones in the respiratory chain. The immediate electron acceptor for the enzyme in this species is believed to be ubiquinone. Couples the redox reaction to proton translocation (for every two electrons transferred, four hydrogen ions are translocated across the cytoplasmic membrane), and thus conserves the redox energy in a proton gradient. The protein is NADH-quinone oxidoreductase subunit I of Ruegeria pomeroyi (strain ATCC 700808 / DSM 15171 / DSS-3) (Silicibacter pomeroyi).